We begin with the raw amino-acid sequence, 350 residues long: Tetraacyldisaccharide 4'-kinase (350 aa).

Residue 49–56 coordinates ATP; it reads TTGGTGKT.

Belongs to the LpxK family.

The catalysed reaction is a lipid A disaccharide + ATP = a lipid IVA + ADP + H(+). It functions in the pathway glycolipid biosynthesis; lipid IV(A) biosynthesis; lipid IV(A) from (3R)-3-hydroxytetradecanoyl-[acyl-carrier-protein] and UDP-N-acetyl-alpha-D-glucosamine: step 6/6. In terms of biological role, transfers the gamma-phosphate of ATP to the 4'-position of a tetraacyldisaccharide 1-phosphate intermediate (termed DS-1-P) to form tetraacyldisaccharide 1,4'-bis-phosphate (lipid IVA). The protein is Tetraacyldisaccharide 4'-kinase of Chlorobaculum tepidum (strain ATCC 49652 / DSM 12025 / NBRC 103806 / TLS) (Chlorobium tepidum).